The primary structure comprises 301 residues: NADH-cytochrome b5 reductase 3 (301 aa).

A lipid anchor (N-myristoyl glycine) is attached at glycine 2. The FAD-binding FR-type domain maps to aspartate 40 to glutamine 152. An N6-acetyllysine modification is found at lysine 42. Tyrosine 43 bears the Phosphotyrosine mark. An N6-acetyllysine modification is found at lysine 50. Residues arginine 92, proline 93, tyrosine 94, valine 109, lysine 111, and phenylalanine 114 each coordinate FAD. N6-acetyllysine is present on lysine 120. Positions 126, 127, 128, and 185 each coordinate FAD.

The protein belongs to the flavoprotein pyridine nucleotide cytochrome reductase family. Component of a complex composed of cytochrome b5, NADH-cytochrome b5 reductase (CYB5R3) and MTARC2. Interacts with MTLN; the interaction is required to maintain cellular lipid composition and leads to stimulation of mitochondrial respiratory complex I activity. FAD is required as a cofactor.

The protein localises to the endoplasmic reticulum membrane. It localises to the mitochondrion outer membrane. It carries out the reaction 2 Fe(III)-[cytochrome b5] + NADH = 2 Fe(II)-[cytochrome b5] + NAD(+) + H(+). Catalyzes the reduction of two molecules of cytochrome b5 using NADH as the electron donor. The polypeptide is NADH-cytochrome b5 reductase 3 (Mus musculus (Mouse)).